The sequence spans 426 residues: Glutamate-1-semialdehyde 2,1-aminomutase (426 aa).

Position 265 is an N6-(pyridoxal phosphate)lysine (K265).

Belongs to the class-III pyridoxal-phosphate-dependent aminotransferase family. HemL subfamily. Homodimer. Requires pyridoxal 5'-phosphate as cofactor.

Its subcellular location is the cytoplasm. The enzyme catalyses (S)-4-amino-5-oxopentanoate = 5-aminolevulinate. Its pathway is porphyrin-containing compound metabolism; protoporphyrin-IX biosynthesis; 5-aminolevulinate from L-glutamyl-tRNA(Glu): step 2/2. This is Glutamate-1-semialdehyde 2,1-aminomutase from Halorhodospira halophila (strain DSM 244 / SL1) (Ectothiorhodospira halophila (strain DSM 244 / SL1)).